Reading from the N-terminus, the 666-residue chain is Spartin (666 aa).

Position 1 is an N-acetylmethionine (Met-1). Positions 16–94 constitute an MIT domain; that stretch reads IREAYKKAFL…LQNVRTRLEI (79 aa). Positions 124–156 are disordered; that stretch reads EKLPEPQSFSSAPQHAEVNGNTSTPSAGAVAAP. A compositionally biased stretch (low complexity) spans 146-156; that stretch reads STPSAGAVAAP. The tract at residues 190-380 is ubiquitin-binding region (UBR) domain; that stretch reads DSGEFSSVGE…QLDQGNKDVR (191 aa). The short motif at 193–200 is the LC3-interacting region (LIR); mediates interaction with MAP1LC3A AND MAP1LC3C element; the sequence is EFSSVGEE. Residues 344-398 form a disordered region; that stretch reads EENEFQIPGRTRPSSDQLKEASGTDVKQLDQGNKDVRHKGKRGKRAKDTSSEEVN. Residue Lys-362 forms a Glycyl lysine isopeptide (Lys-Gly) (interchain with G-Cter in ubiquitin) linkage. A compositionally biased stretch (basic residues) spans 379–388; it reads VRHKGKRGKR. The region spanning 427-611 is the Senescence domain; the sequence is ILSGASWVSW…YNINNIGIKA (185 aa). The required for localization to lipid droplets stretch occupies residues 431–503; the sequence is ASWVSWGLVK…LVDGVCTVAN (73 aa). Ser-470 is subject to Phosphoserine. Residues 636-666 form a disordered region; the sequence is RENQEGAANVNVRGEKDEQTKEVKEAKKKDK. The segment covering 648–666 has biased composition (basic and acidic residues); the sequence is RGEKDEQTKEVKEAKKKDK.

Interacts with ITCH and WWP1. Interacts (via MIT domain) with IST1; leading to the recruitment of SPART to midbodies. Interacts with MAP1LC3A and MAP1LC3C. In terms of processing, ubiquitinated; ubiquitination does not require ITCH and WWP1. Ubiquitously expressed, with highest levels of expression detected in adipose tissue.

The protein resides in the cytoplasm. It is found in the midbody. The protein localises to the lipid droplet. Functionally, lipophagy receptor that plays an important role in lipid droplet (LD) turnover in motor neurons. Localizes to LDs and interacts with components of the autophagy machinery, such as MAP1LC3A/C proteins to deliver LDs to autophagosomes for degradation via lipophagy. Lipid transfer protein required for lipid droplet degradation, including by lipophagy. Can bind and transfer all lipid species found in lipid droplets, from phospholipids to triglycerides and sterol esters but the direction of lipid transfer by spartin and its cargos are unknown. May be implicated in endosomal trafficking, or microtubule dynamics, or both. Participates in cytokinesis. In Homo sapiens (Human), this protein is Spartin.